Reading from the N-terminus, the 349-residue chain is Cyclic amide hydrolase (349 aa).

Residues 1-90 (MTSPEDTAGV…AVFVDDPASS (90 aa)) form an RU A region. Arginine 38 contacts substrate. The interval 99-231 (GLSIGVTTTA…AAVLVMGNSP (133 aa)) is RU B. Lysine 149 is a catalytic residue. Residues arginine 176, 214–215 (SA), lysine 311, and 330–331 (SG) each bind substrate. Residue serine 214 is the Nucleophile of the active site. The interval 237 to 349 (YRIGHGVLRD…GGGTVAVIAR (113 aa)) is RU C.

Belongs to the cyclic amide hydrolase (CyAH) family. In terms of assembly, homotetramer.

In terms of biological role, cyclic amide hydrolase of unknown substrate specificity. Catalyzes the hydrolytic ring-opening of a cyclic amide. Does not act on cyanuric acid nor barbituric acid. This is Cyclic amide hydrolase from Rhodococcus sp.